Reading from the N-terminus, the 653-residue chain is Splicing factor 1 (653 aa).

2 disordered regions span residues 1 to 44 (MATG…PPGL) and 65 to 94 (LRTG…GKRL). The residue at position 2 (alanine 2) is an N-acetylalanine. Serine 14 carries the post-translational modification Phosphoserine. The Nuclear localization signal motif lies at 15 to 19 (KKRKR). Residue serine 20 is modified to Phosphoserine; by PKG. Serine 80 and serine 82 each carry phosphoserine. Tyrosine 87 carries the post-translational modification Phosphotyrosine. Position 89 is a phosphoserine (serine 89). The KH domain maps to 141-222 (MIPQDEYPEI…ENVKKAVEQI (82 aa)). The CCHC-type zinc-finger motif lies at 277-296 (TVCTKCGGAGHIASDCKFQR). 2 disordered regions span residues 325 to 584 (VPAS…APPP) and 611 to 653 (RIPP…GKAA). The segment covering 335–350 (PATTPLASAPRPAAPA) has biased composition (low complexity). Over residues 382–394 (MHGGGPGGPGGGP) the composition is skewed to gly residues. Pro residues-rich tracts occupy residues 418 to 447 (NGPP…PPPM) and 470 to 499 (MPPP…PLPP). Residues 515–534 (SSMASSTPLPWQQNTTTTTT) are compositionally biased toward low complexity. A compositionally biased stretch (pro residues) spans 567 to 584 (VPLPPGVQPPLPPGAPPP).

It belongs to the BBP/SF1 family. Binds U2AF2. Interacts with U1 snRNA. Interacts with RBM17. Binds EWSR1, FUS and TAF15. In terms of processing, phosphorylation on Ser-20 interferes with U2AF2 binding and spliceosome assembly. As to expression, detected at intermediate levels in spleen. Lower levels in heart, kidney, brain, liver, testis, bone marrow, adrenal gland, lymph nodes, pancreas and thymus.

It is found in the nucleus. Necessary for the ATP-dependent first step of spliceosome assembly. Binds to the intron branch point sequence (BPS) 5'-UACUAAC-3' of the pre-mRNA. May act as transcription repressor. The chain is Splicing factor 1 (Sf1) from Mus musculus (Mouse).